The following is a 320-amino-acid chain: N-acetylneuraminate lyase (320 aa).

Aceneuramate contacts are provided by Thr51 and Thr52. Tyr143 acts as the Proton donor in catalysis. Residue Lys173 is the Schiff-base intermediate with substrate of the active site. The aceneuramate site is built by Ser175, Gly199, Asp201, Glu202, and Ser218.

This sequence belongs to the DapA family. NanA subfamily. Homotetramer. Isoform 2 is expressed in placenta, liver, kidney, pancreas, spleen, thymus, ovary, small intestine and peripheral blood leukocyte.

The protein localises to the cytoplasm. The catalysed reaction is aceneuramate = aldehydo-N-acetyl-D-mannosamine + pyruvate. Its pathway is amino-sugar metabolism; N-acetylneuraminate degradation. Catalyzes the cleavage of N-acetylneuraminic acid (sialic acid) to form pyruvate and N-acetylmannosamine via a Schiff base intermediate. It prevents sialic acids from being recycled and returning to the cell surface. Involved in the N-glycolylneuraminic acid (Neu5Gc) degradation pathway. Although human is not able to catalyze formation of Neu5Gc due to the inactive CMAHP enzyme, Neu5Gc is present in food and must be degraded. The chain is N-acetylneuraminate lyase from Homo sapiens (Human).